The primary structure comprises 394 residues: MDIHEYQAKELLARHGVHVPRGGLAYSPEQATYRAREIGGGKWVLKAQVHSGARGKAGGIKLCANDEEISSAAEAMLGRKLVTQQTGPRGKLISRLYLEEAVDIAQELYVGFVLDRKEERVMIVASAAGGMEIEDIVEKEPNSILRTSVDPGVGMQRFQAREIAFGLGLDHNLIGKATETIFSCYQVFRDYDASMLEINPLVVTRDGNLIALDAKMSFDENALFRRPEISELRDKSQEDPRETFASDRGLSYVGLDGNIGCIINGAGLAMATMDMIKIAGGEPANFLDIGGGASPERVAKSFRAVLGDKNVETILVNIFAGINRCDWVAEGVIKAIREVGVNVPLVVRLSGTKAEEGRRILADSGEAVIVADTLAEAAEKAVAAWRAAAKKKAA.

Residues 9 to 244 (KELLARHGVH…KSQEDPRETF (236 aa)) enclose the ATP-grasp domain. Positions 46, 99, 102, and 107 each coordinate ATP. Mg(2+)-binding residues include Asn-199 and Asp-213.

The protein belongs to the succinate/malate CoA ligase beta subunit family. As to quaternary structure, heterotetramer of two alpha and two beta subunits. Mg(2+) serves as cofactor.

It catalyses the reaction (S)-malate + ATP + CoA = (S)-malyl-CoA + ADP + phosphate. It functions in the pathway one-carbon metabolism; formaldehyde assimilation via serine pathway. In Mesorhizobium japonicum (strain LMG 29417 / CECT 9101 / MAFF 303099) (Mesorhizobium loti (strain MAFF 303099)), this protein is Probable malate--CoA ligase subunit beta (mtkA).